Reading from the N-terminus, the 90-residue chain is Probable Fe(2+)-trafficking protein (90 aa).

Belongs to the Fe(2+)-trafficking protein family.

Its function is as follows. Could be a mediator in iron transactions between iron acquisition and iron-requiring processes, such as synthesis and/or repair of Fe-S clusters in biosynthetic enzymes. The sequence is that of Probable Fe(2+)-trafficking protein from Vibrio atlanticus (strain LGP32) (Vibrio splendidus (strain Mel32)).